The primary structure comprises 382 residues: Norsolorinic acid reductase B (382 aa).

Aspartate 64 serves as a coordination point for NADP(+). The active-site Proton donor is the tyrosine 69. Histidine 143 lines the substrate pocket. NADP(+) contacts are provided by residues 173-174, glutamine 199, 228-238, and 302-310; these read SD, GVLNQGRFRTE, and RKVDHLTGV.

Belongs to the aldo/keto reductase family. Aldo/keto reductase 2 subfamily.

The protein operates within mycotoxin biosynthesis; aflatoxin biosynthesis. Norsolorinic acid reductase; part of the gene cluster that mediates the biosynthesis of aflatoxins, a group of polyketide-derived furanocoumarins, and part of the most toxic and carcinogenic compounds among the known mycotoxins. The four major aflatoxins produced by A.parasiticus are aflatoxin B1 (AFB1), aflatoxin B2 (AFB2), aflatoxin G1 (AFG1) and aflatoxin G2 (AFG2). Within the aflatoxin pathway, the norsolorinic acid reductase aflE may play a role in the conversion of norsolorinic acid (NOR) to averantin (AVN). The biosynthesis of aflatoxins begins with the norsolorinic acid synthase aflC that combines a hexanoyl starter unit produced by the fatty acid synthase aflA/aflB and 7 malonyl-CoA extender units to synthesize the precursor NOR. The second step is the conversion of NOR to averantin and requires the norsolorinic acid ketoreductase aflD, which catalyzes the dehydration of norsolorinic acid to form (1'S)-averantin. The norsolorinic acid reductases aflE and aflF may also play a role in the conversion of NOR to AVN. The cytochrome P450 monooxygenase aflG then catalyzes the hydroxylation of AVN to 5'hydroxyaverantin (HAVN). The next step is performed by the 5'-hydroxyaverantin dehydrogenase aflH that transforms HAVN to 5'-oxoaverantin (OAVN) which is further converted to averufin (AVF) by aflK that plays a dual role in the pathway, as a 5'-oxoaverantin cyclase that mediates conversion of 5'-oxoaverantin, as well as a versicolorin B synthase in a later step in the pathway. The averufin oxidase aflI catalyzes the conversion of AVF to versiconal hemiacetal acetate (VHA). VHA is then the substrate for the versiconal hemiacetal acetate esterase aflJ to yield versiconal (VAL). Versicolorin B synthase aflK then converts VAL to versicolorin B (VERB) by closing the bisfuran ring of aflatoxin which is required for DNA-binding, thus giving to aflatoxin its activity as a mutagen. Then, the activity of the versicolorin B desaturase aflL leads to versicolorin A (VERA). A branch point starts from VERB since it can also be converted to dihydrodemethylsterigmatocystin (DMDHST), probably also by aflL, VERA being a precursor for aflatoxins B1 and G1, and DMDHST for aflatoxins B2 and G2. Next, the versicolorin reductase aflM and the cytochrome P450 monooxygenase aflN are involved in conversion of VERA to demethylsterigmatocystin (DMST). AflX and aflY seem also involved in this step, through probable aflX-mediated epoxide ring-opening step following versicolorin A oxidation and aflY-mediated Baeyer-Villiger oxidation required for the formation of the xanthone ring. The methyltransferase aflO then leads to the modification of DMST to sterigmatocystin (ST), and of DMDHST to dihydrosterigmatocystin (DHST). Both ST and DHST are then substrates of the O-methyltransferase aflP to yield O-methylsterigmatocystin (OMST) and dihydro-O-methylsterigmatocystin (DHOMST), respectively. Finally OMST is converted to aflatoxins B1 and G1, and DHOMST to aflatoxins B2 and G2, via the action of several enzymes including O-methylsterigmatocystin oxidoreductase aflQ, the cytochrome P450 monooxygenase aflU, but also the NADH-dependent flavin oxidoreductase nadA which is specifically required for the synthesis of AFG1. This is Norsolorinic acid reductase B from Aspergillus parasiticus (strain ATCC 56775 / NRRL 5862 / SRRC 143 / SU-1).